The primary structure comprises 178 residues: FMN reductase (NADH) RutF (178 aa).

Belongs to the non-flavoprotein flavin reductase family. RutF subfamily.

The catalysed reaction is FMNH2 + NAD(+) = FMN + NADH + 2 H(+). Its function is as follows. Catalyzes the reduction of FMN to FMNH2 which is used to reduce pyrimidine by RutA via the Rut pathway. This chain is FMN reductase (NADH) RutF, found in Pseudomonas syringae pv. syringae (strain B728a).